The chain runs to 728 residues: Homoaconitase, mitochondrial (728 aa).

The transit peptide at 1-24 directs the protein to the mitochondrion; it reads MVAIPRLARLSVPAWALSARGRFY. 3 residues coordinate [4Fe-4S] cluster: C362, C422, and C425.

The protein belongs to the aconitase/IPM isomerase family. [4Fe-4S] cluster serves as cofactor.

It localises to the mitochondrion. It carries out the reaction (2R,3S)-homoisocitrate = cis-homoaconitate + H2O. Its pathway is amino-acid biosynthesis; L-lysine biosynthesis via AAA pathway; L-alpha-aminoadipate from 2-oxoglutarate: step 3/5. Catalyzes the reversible hydration of cis-homoaconitate to (2R,3S)-homoisocitrate, a step in the alpha-aminoadipate pathway for lysine biosynthesis. The chain is Homoaconitase, mitochondrial (LYS4) from Cryptococcus neoformans var. neoformans serotype D (strain JEC21 / ATCC MYA-565) (Filobasidiella neoformans).